A 123-amino-acid polypeptide reads, in one-letter code: MTIDEMMSAIKGMTVIELSELVKALEKEFGVSAAVAVAAPAAGGAAAAAAVEEKTEFNVILKDVGANKINVIKAVRELTSLGLKEAKDMVEAAPKAVKENVSKEEADAAKKALEAAGATVEIK.

It belongs to the bacterial ribosomal protein bL12 family. As to quaternary structure, homodimer. Part of the ribosomal stalk of the 50S ribosomal subunit. Forms a multimeric L10(L12)X complex, where L10 forms an elongated spine to which 2 to 4 L12 dimers bind in a sequential fashion. Binds GTP-bound translation factors.

In terms of biological role, forms part of the ribosomal stalk which helps the ribosome interact with GTP-bound translation factors. Is thus essential for accurate translation. The sequence is that of Large ribosomal subunit protein bL12 from Dehalococcoides mccartyi (strain ATCC BAA-2100 / JCM 16839 / KCTC 5957 / BAV1).